We begin with the raw amino-acid sequence, 536 residues long: CTP synthase (536 aa).

The tract at residues 1-267 (MSKFVFVTGG…CKETLKYLEL (267 aa)) is amidoligase domain. A CTP-binding site is contributed by Ser-13. Ser-13 is a UTP binding site. ATP-binding positions include 14–19 (SIGKGI) and Asp-71. Residues Asp-71 and Glu-141 each contribute to the Mg(2+) site. CTP contacts are provided by residues 148–150 (DIE), 188–193 (KTKPTQ), and Lys-224. Residues 188-193 (KTKPTQ) and Lys-224 each bind UTP. The region spanning 292-534 (KVALVGKYIE…IKASQEKLTQ (243 aa)) is the Glutamine amidotransferase type-1 domain. Gly-354 is a binding site for L-glutamine. Catalysis depends on Cys-381, which acts as the Nucleophile; for glutamine hydrolysis. L-glutamine-binding positions include 382–385 (LGMQ), Glu-405, and Arg-462. Residues His-507 and Glu-509 contribute to the active site.

This sequence belongs to the CTP synthase family. As to quaternary structure, homotetramer.

The enzyme catalyses UTP + L-glutamine + ATP + H2O = CTP + L-glutamate + ADP + phosphate + 2 H(+). It carries out the reaction L-glutamine + H2O = L-glutamate + NH4(+). It catalyses the reaction UTP + NH4(+) + ATP = CTP + ADP + phosphate + 2 H(+). It functions in the pathway pyrimidine metabolism; CTP biosynthesis via de novo pathway; CTP from UDP: step 2/2. Its activity is regulated as follows. Allosterically activated by GTP, when glutamine is the substrate; GTP has no effect on the reaction when ammonia is the substrate. The allosteric effector GTP functions by stabilizing the protein conformation that binds the tetrahedral intermediate(s) formed during glutamine hydrolysis. Inhibited by the product CTP, via allosteric rather than competitive inhibition. Functionally, catalyzes the ATP-dependent amination of UTP to CTP with either L-glutamine or ammonia as the source of nitrogen. Regulates intracellular CTP levels through interactions with the four ribonucleotide triphosphates. This chain is CTP synthase, found in Prochlorococcus marinus (strain MIT 9215).